The chain runs to 398 residues: Bifunctional enzyme IspD/IspF (398 aa).

The interval 1-234 is 2-C-methyl-D-erythritol 4-phosphate cytidylyltransferase; the sequence is MSNSKRTAAI…SRLGALLGDI (234 aa). The tract at residues 235–398 is 2-C-methyl-D-erythritol 2,4-cyclodiphosphate synthase; it reads RTGTGYDVHA…LPWGTNGLAD (164 aa). Positions 241 and 243 each coordinate a divalent metal cation. 4-CDP-2-C-methyl-D-erythritol 2-phosphate is bound by residues 241–243 and 267–268; these read DVH and HS. His-275 is an a divalent metal cation binding site. 4-CDP-2-C-methyl-D-erythritol 2-phosphate contacts are provided by residues 289–291, 365–368, Phe-372, and Arg-375; these read DIG and TTSE.

It in the N-terminal section; belongs to the IspD/TarI cytidylyltransferase family. IspD subfamily. In the C-terminal section; belongs to the IspF family. A divalent metal cation is required as a cofactor.

It carries out the reaction 2-C-methyl-D-erythritol 4-phosphate + CTP + H(+) = 4-CDP-2-C-methyl-D-erythritol + diphosphate. It catalyses the reaction 4-CDP-2-C-methyl-D-erythritol 2-phosphate = 2-C-methyl-D-erythritol 2,4-cyclic diphosphate + CMP. It functions in the pathway isoprenoid biosynthesis; isopentenyl diphosphate biosynthesis via DXP pathway; isopentenyl diphosphate from 1-deoxy-D-xylulose 5-phosphate: step 2/6. Its pathway is isoprenoid biosynthesis; isopentenyl diphosphate biosynthesis via DXP pathway; isopentenyl diphosphate from 1-deoxy-D-xylulose 5-phosphate: step 4/6. Functionally, bifunctional enzyme that catalyzes the formation of 4-diphosphocytidyl-2-C-methyl-D-erythritol from CTP and 2-C-methyl-D-erythritol 4-phosphate (MEP) (IspD), and catalyzes the conversion of 4-diphosphocytidyl-2-C-methyl-D-erythritol 2-phosphate (CDP-ME2P) to 2-C-methyl-D-erythritol 2,4-cyclodiphosphate (ME-CPP) with a corresponding release of cytidine 5-monophosphate (CMP) (IspF). The polypeptide is Bifunctional enzyme IspD/IspF (Rhodopseudomonas palustris (strain BisB18)).